The chain runs to 2643 residues: Ankyrin repeat domain-containing protein 11 (2643 aa).

Disordered stretches follow at residues 1–90 (MPKG…KEPV) and 128–170 (SANS…RGET). Basic and acidic residues-rich tracts occupy residues 21-54 (MVEK…VRER) and 69-90 (EQKD…KEPV). Positions 128 to 155 (SANSPVDTTPKHPSQSTVCQKGTPNSAS) are enriched in polar residues. The span at 156–170 (KTKDKVNKRNERGET) shows a compositional bias: basic and acidic residues. 4 ANK repeats span residues 167-196 (RGET…DVNV), 200-229 (AGWT…EVNT), 233-262 (DDDT…NPQQ), and 266-292 (KGET…YTSS). Phosphoserine is present on serine 276. A disordered region spans residues 289 to 365 (YTSSEESSTE…DRVPPVDDKH (77 aa)). Residues 295-305 (SSTESSEEEDA) show a composition bias toward acidic residues. Over residues 309 to 320 (APSSSVDGNNTD) the composition is skewed to polar residues. Basic and acidic residues-rich tracts occupy residues 322–335 (EFEK…KNPE) and 356–365 (DRVPPVDDKH). Residue serine 408 is modified to Phosphoserine. Threonine 410 bears the Phosphothreonine mark. The residue at position 411 (serine 411) is a Phosphoserine. 3 disordered regions span residues 423-504 (GEKL…CLKG), 517-651 (SLSA…GQCS), and 727-805 (DANK…DKEK). The span at 438–451 (KARESSSSRQQKEK) shows a compositional bias: basic and acidic residues. Positions 452-462 (NKLKKKRKKET) are enriched in basic residues. Basic and acidic residues predominate over residues 463–475 (KGKEVRFGKRSDK). A compositionally biased stretch (acidic residues) spans 484-494 (ESSESEEDDGD). The span at 517–528 (SLSASSTSSHGS) shows a compositional bias: low complexity. Over residues 537–550 (GHTDQHTKHWRTDN) the composition is skewed to basic and acidic residues. Polar residues predominate over residues 557–574 (PAWSEVSSLSDSSRTGLT). Positions 575–588 (SESDCSSEGSSVES) are enriched in low complexity. Basic residues-rich tracts occupy residues 591–602 (PTRRKQEHRKRG) and 633–646 (VKKH…KHKE). The residue at position 838 (serine 838) is a Phosphoserine. 2 stretches are compositionally biased toward basic and acidic residues: residues 918-931 (KNSE…EKHK) and 938-962 (SEKD…IRSE). 3 disordered regions span residues 918 to 962 (KNSE…IRSE), 977 to 1037 (SFKD…STLD), and 1051 to 1074 (EKKD…FDQL). Phosphoserine is present on serine 1070. The residue at position 1111 (threonine 1111) is a Phosphothreonine. A Phosphoserine modification is found at serine 1114. 2 disordered regions span residues 1114 to 1388 (SEDE…KDAS) and 1420 to 1711 (LFSS…TPSC). 8 stretches are compositionally biased toward basic and acidic residues: residues 1133–1297 (DTQR…DKIS), 1326–1343 (AEDK…LREK), 1355–1388 (KSHE…KDAS), 1420–1444 (LFSS…KELK), 1464–1535 (RERW…KGDS), 1546–1564 (VPSR…KLLG), 1577–1587 (LSQKDLEIEER), and 1595–1640 (MKQM…KVKE). Serine 1676 is modified (phosphoserine). Over residues 1678 to 1695 (RTEQSRPTGVPTPTSVVS) the composition is skewed to polar residues. A phosphoserine mark is found at serine 1777 and serine 1832. Tyrosine 1835 and tyrosine 1836 each carry phosphotyrosine. A phosphoserine mark is found at serine 1837 and serine 1844. Disordered stretches follow at residues 1863–1900 (PPDS…GLPL), 1981–2027 (SPKH…EVKD), and 2111–2386 (HEAF…STQQ). Residues serine 1981 and serine 2139 each carry the phosphoserine modification. Composition is skewed to pro residues over residues 2150-2160 (PVPPAESPPGP) and 2175-2184 (EEPPAPPPQE). Residues 2273–2284 (SAEASCVVAAAE) show a composition bias toward low complexity. Residues 2297-2315 (PEPKPTSEVPKAPKVEEVP) are compositionally biased toward basic and acidic residues. The important for protein degradation stretch occupies residues 2349 to 2643 (AKGRASEEED…VNDDFVLLPA (295 aa)). Positions 2371–2386 (RSSQQLQQQLNTSTQQ) are enriched in low complexity.

In terms of assembly, interacts with the PAS region of the p160 coactivators. Post-translationally, subject to proteasomal degradation which is probably essential to regulate its activity.

The protein resides in the nucleus. Chromatin regulator which modulates histone acetylation and gene expression in neural precursor cells. May recruit histone deacetylases (HDACs) to the p160 coactivators/nuclear receptor complex to inhibit ligand-dependent transactivation. Has a role in proliferation and development of cortical neural precursors. May also regulate bone homeostasis. The polypeptide is Ankyrin repeat domain-containing protein 11 (Mus musculus (Mouse)).